We begin with the raw amino-acid sequence, 598 residues long: Acetylcholine receptor subunit alpha-type acr-5 (598 aa).

The signal sequence occupies residues 1-16 (MLPNIILILLIRYCSC). Residues 17–323 (GAGSRVYEKY…HLVIRRKPLY (307 aa)) are Extracellular-facing. N-linked (GlcNAc...) asparagine glycans are attached at residues Asn-54, Asn-71, Asn-77, Asn-134, Asn-178, and Asn-252. Residues 324–344 (YMINLVVPTSIITIVAVTGFF) form a helical membrane-spanning segment. The Cytoplasmic segment spans residues 345 to 356 (TPTSSSSERDEK). The chain crosses the membrane as a helical span at residues 357 to 377 (LYLGINTLLTMSVMMLMVCNQ). Residues 378–391 (MPSTSTYVPLMSWY) lie on the Extracellular side of the membrane. Residues 392–412 (YIGIIMVIVVGTFLATGVLAI) traverse the membrane as a helical segment. Residues 413–563 (HGQKHYNKPI…WEFLANVLDR (151 aa)) lie on the Cytoplasmic side of the membrane. A helical membrane pass occupies residues 564–584 (ILLTIFCGFTFAVFIILIGFD). Topologically, residues 585–598 (SFFTFHTDSPPKTM) are extracellular.

Belongs to the ligand-gated ion channel (TC 1.A.9) family. Acetylcholine receptor (TC 1.A.9.1) subfamily.

It localises to the postsynaptic cell membrane. It is found in the cell membrane. Its function is as follows. Subunit of nicotinic acetylcholine receptor (nAChR). Involved in nAChR sensitivity to nicotine. Modulates locomotion towards the drug nicotine. The sequence is that of Acetylcholine receptor subunit alpha-type acr-5 from Caenorhabditis elegans.